We begin with the raw amino-acid sequence, 364 residues long: Developmentally-regulated GTP-binding protein 2 (364 aa).

Lys21 carries the (3S)-3-hydroxylysine modification. Positions 63-288 (ARVALIGFPS…LLEMLWEYLA (226 aa)) constitute an OBG-type G domain. GTP contacts are provided by residues 69–76 (GFPSVGKS), 94–98 (FTTLT), 115–118 (DLPG), 246–249 (NKID), and 269–271 (SCG). Residues Ser76 and Thr96 each contribute to the Mg(2+) site. The region spanning 288–363 (ALTCIYTKKR…EHEDVIQIVK (76 aa)) is the TGS domain.

The protein belongs to the TRAFAC class OBG-HflX-like GTPase superfamily. OBG GTPase family. As to quaternary structure, interacts with RWDD1; this interaction confers protection to polyubiquitination and proteolytic degradation. Interacts with JMJD7; this interaction is direct. Requires Mg(2+) as cofactor. Post-translationally, polyubiquitinated. In terms of processing, hydroxylated (with S stereochemistry) at C-3 of Lys-21 by JMJD7. In terms of tissue distribution, fairly high levels in liver, heart, kidney, and brain. Very low levels in lung, spleen, testis and skeletal muscle.

It is found in the nucleus. The protein localises to the cytoplasm. It carries out the reaction GTP + H2O = GDP + phosphate + H(+). Catalyzes the conversion of GTP to GDP through hydrolysis of the gamma-phosphate bond in GTP. When hydroxylated at C-3 of 'Lys-21' by JMJD7, may bind to RNA and play a role in translation. The polypeptide is Developmentally-regulated GTP-binding protein 2 (Drg2) (Mus musculus (Mouse)).